The chain runs to 271 residues: Malonyl-[acyl-carrier protein] O-methyltransferase (271 aa).

It belongs to the methyltransferase superfamily.

The catalysed reaction is malonyl-[ACP] + S-adenosyl-L-methionine = malonyl-[ACP] methyl ester + S-adenosyl-L-homocysteine. The protein operates within cofactor biosynthesis; biotin biosynthesis. Converts the free carboxyl group of a malonyl-thioester to its methyl ester by transfer of a methyl group from S-adenosyl-L-methionine (SAM). It allows to synthesize pimeloyl-ACP via the fatty acid synthetic pathway. The chain is Malonyl-[acyl-carrier protein] O-methyltransferase from Halalkalibacterium halodurans (strain ATCC BAA-125 / DSM 18197 / FERM 7344 / JCM 9153 / C-125) (Bacillus halodurans).